An 829-amino-acid chain; its full sequence is MKMTRRAFVKANAAASAAAVAGVTLPASATNLIVSSDQTKIKWDKAPCRFCGTGCSVLVGTQNGRVVATQGDPEAPVNKGLNCIKGYFLSKIMYGKDRVQTPMLRMKDGQYNKDGDFAPVSWDVALDTMAEKWKAALKKHGPTGVGMFGSGQWTVMEGYAAVKLMKAGFRSNNIDPNARHCMASAVGAFMRTFGIDEPMGCYDDFENADSFVLWGSNMAEMHPVLWTRISDRRLSHPHVKVNVLSTYYHRSFELADKGYIFEPQSDLAIANFIANYIIQNNAVNWDFVNKHTNFKQATTDIGYGLRDDDPLQMEAANPNSGAMSSISFEEYKKSVAPYTAQKASEMSGVSEEDLITLAKQYADPKTKVMSLWTMGMNQHTRGVWMNSLVYNIHLLTGKIATPGNSPFSLTGQPSACGTAREVGTFSHRLPADMVVANPKHRAISEKIWKLPEGTLNGKPGAHAVVQDRMLKDGKINAYWVMCNNNMQAGPNINTERLPGYRNPENFIVCSDPYPTATAQAADLILPTAMWVEKEGAYGNAERRTQAWYQQVQAKGEAKSDLWQIMEFSKRFKVEEVWGEELVAKAPEYRGKTMYDILFKNGQVDAFPLSEAQELNDDAKAQGFYVQKGLFEEYASFGRGHGHDLAPYDTYHTVRGLRWPVVDGKETLWRFKEGSDPYAKKGSDWDFYGKPDGKALIISAPYEAPPEVPNDEFDMWLCTGRVLEHWHTGTMTRRVPELYKAVPDALCYIHPADAKKRNLRRGDEVLISNKRGEVRVRVETRGRNRPPEGLVFVPFFDARILINKLILDATDPLSKQTDFKKCPVKITKIA.

Residues 1 to 29 (MKMTRRAFVKANAAASAAAVAGVTLPASA) constitute a signal peptide (tat-type signal). Positions 41 to 97 (IKWDKAPCRFCGTGCSVLVGTQNGRVVATQGDPEAPVNKGLNCIKGYFLSKIMYGKD) constitute a 4Fe-4S Mo/W bis-MGD-type domain. 4 residues coordinate [4Fe-4S] cluster: Cys-48, Cys-51, Cys-55, and Cys-83. Mo-bis(molybdopterin guanine dinucleotide) is bound by residues Lys-85, Gln-152, Asn-177, Cys-181, 214 to 221 (WGSNMAEM), 245 to 249 (STYYH), 264 to 266 (QSD), Met-374, Gln-378, Asn-484, 510 to 511 (SD), Lys-533, Asp-560, and 718 to 727 (TGRVLEHWHT). Phe-794 is a substrate binding site. 2 residues coordinate Mo-bis(molybdopterin guanine dinucleotide): Asn-802 and Lys-819.

This sequence belongs to the prokaryotic molybdopterin-containing oxidoreductase family. NasA/NapA/NarB subfamily. In terms of assembly, component of the periplasmic nitrate reductase NapAB complex composed of NapA and NapB. It depends on [4Fe-4S] cluster as a cofactor. The cofactor is Mo-bis(molybdopterin guanine dinucleotide). Post-translationally, predicted to be exported by the Tat system. The position of the signal peptide cleavage has not been experimentally proven.

Its subcellular location is the periplasm. The enzyme catalyses 2 Fe(II)-[cytochrome] + nitrate + 2 H(+) = 2 Fe(III)-[cytochrome] + nitrite + H2O. In terms of biological role, catalytic subunit of the periplasmic nitrate reductase complex NapAB. Receives electrons from NapB and catalyzes the reduction of nitrate to nitrite. In Aliivibrio fischeri (strain ATCC 700601 / ES114) (Vibrio fischeri), this protein is Periplasmic nitrate reductase.